Reading from the N-terminus, the 98-residue chain is NADH-ubiquinone oxidoreductase chain 4L (98 aa).

3 helical membrane passes run 1-21, 29-49, and 61-81; these read MSMV…GLLV, SLLC…ITIL, and IILL…LVMV.

This sequence belongs to the complex I subunit 4L family. As to quaternary structure, core subunit of respiratory chain NADH dehydrogenase (Complex I) which is composed of 45 different subunits.

The protein localises to the mitochondrion inner membrane. The catalysed reaction is a ubiquinone + NADH + 5 H(+)(in) = a ubiquinol + NAD(+) + 4 H(+)(out). Functionally, core subunit of the mitochondrial membrane respiratory chain NADH dehydrogenase (Complex I) which catalyzes electron transfer from NADH through the respiratory chain, using ubiquinone as an electron acceptor. Part of the enzyme membrane arm which is embedded in the lipid bilayer and involved in proton translocation. This is NADH-ubiquinone oxidoreductase chain 4L (MT-ND4L) from Mephitis mephitis (Striped skunk).